The chain runs to 283 residues: Putative transcription factor kapC (283 aa).

Residues 1 to 10 (MQPTLAPAPH) are compositionally biased toward pro residues. The tract at residues 1 to 121 (MQPTLAPAPH…NRAAQRAFRQ (121 aa)) is disordered. Positions 26 to 42 (HDQLLAAHQHLSHPQQA) are enriched in low complexity. Over residues 55 to 67 (QPNTTSPRDQNNI) the composition is skewed to polar residues. The bZIP domain maps to 102-165 (PLSTSKRAAQ…EYIINLQSRL (64 aa)). The basic motif stretch occupies residues 103–126 (LSTSKRAAQNRAAQRAFRQRKESY). The span at 108-118 (RAAQNRAAQRA) shows a compositional bias: low complexity. Positions 130–161 (LEEQVKEFDNTNETMKQLQAENYQLREYIINL) are leucine-zipper. Residues 178 to 283 (NIDLNQPRND…EPGHGLPVVS (106 aa)) are disordered.

This sequence belongs to the bZIP family.

The protein localises to the nucleus. Putative transcription factor. The sequence is that of Putative transcription factor kapC (kapC) from Aspergillus niger (strain ATCC MYA-4892 / CBS 513.88 / FGSC A1513).